Reading from the N-terminus, the 301-residue chain is Methionyl-tRNA formyltransferase (301 aa).

(6S)-5,6,7,8-tetrahydrofolate is bound at residue 109-112; it reads SLLP.

It belongs to the Fmt family.

The catalysed reaction is L-methionyl-tRNA(fMet) + (6R)-10-formyltetrahydrofolate = N-formyl-L-methionyl-tRNA(fMet) + (6S)-5,6,7,8-tetrahydrofolate + H(+). In terms of biological role, attaches a formyl group to the free amino group of methionyl-tRNA(fMet). The formyl group appears to play a dual role in the initiator identity of N-formylmethionyl-tRNA by promoting its recognition by IF2 and preventing the misappropriation of this tRNA by the elongation apparatus. In Anaplasma marginale (strain St. Maries), this protein is Methionyl-tRNA formyltransferase.